Reading from the N-terminus, the 263-residue chain is Imidazole glycerol phosphate synthase subunit HisF (263 aa).

Catalysis depends on residues D11 and D130.

Belongs to the HisA/HisF family. In terms of assembly, heterodimer of HisH and HisF.

The protein resides in the cytoplasm. The enzyme catalyses 5-[(5-phospho-1-deoxy-D-ribulos-1-ylimino)methylamino]-1-(5-phospho-beta-D-ribosyl)imidazole-4-carboxamide + L-glutamine = D-erythro-1-(imidazol-4-yl)glycerol 3-phosphate + 5-amino-1-(5-phospho-beta-D-ribosyl)imidazole-4-carboxamide + L-glutamate + H(+). The protein operates within amino-acid biosynthesis; L-histidine biosynthesis; L-histidine from 5-phospho-alpha-D-ribose 1-diphosphate: step 5/9. Functionally, IGPS catalyzes the conversion of PRFAR and glutamine to IGP, AICAR and glutamate. The HisF subunit catalyzes the cyclization activity that produces IGP and AICAR from PRFAR using the ammonia provided by the HisH subunit. The polypeptide is Imidazole glycerol phosphate synthase subunit HisF (Herpetosiphon aurantiacus (strain ATCC 23779 / DSM 785 / 114-95)).